The chain runs to 257 residues: MSVPLILTLLAGAATFIGAFLAVLGQKPSNRVLAFSLGFAAGIMLLISLMEMLPAALAVEGMSPVLGYGMFIIGLLGYFGLDRMLPHAHPQDLMQKTQQPLPKSIRRTAILLTLGISLHNFPEGIATFVTASSNLELGMGIALAVALHNIPEGLAVAGPVYAATGSKRTAIFWAGISGMAEILGGVLAWLILGSLISPVVMAAVMAAVAGIMVALSVDELMPLAKEIDPNNNPSYGVLCGMSVMGLSLVVLQTAGIG.

5 consecutive transmembrane segments (helical) span residues 5-25 (LILT…AVLG), 32-52 (VLAF…LMEM), 61-81 (GMSP…YFGL), 109-129 (AILL…ATFV), and 137-157 (LGMG…LAVA). Residues N120 and E123 each contribute to the Fe(2+) site. Residues E123 and H148 each contribute to the Zn(2+) site. Positions 149, 152, and 181 each coordinate Fe(2+). Zn(2+) is bound at residue E152. 3 helical membrane passes run 182 to 202 (ILGG…VVMA), 203 to 223 (AVMA…LMPL), and 236 to 256 (GVLC…TAGI).

It belongs to the ZIP transporter (TC 2.A.5) family. ZupT subfamily.

It localises to the cell inner membrane. It carries out the reaction Zn(2+)(in) = Zn(2+)(out). Functionally, mediates zinc uptake. May also transport other divalent cations. The chain is Zinc transporter ZupT from Escherichia fergusonii (strain ATCC 35469 / DSM 13698 / CCUG 18766 / IAM 14443 / JCM 21226 / LMG 7866 / NBRC 102419 / NCTC 12128 / CDC 0568-73).